The chain runs to 62 residues: Photosystem II reaction center protein Z (62 aa).

2 helical membrane-spanning segments follow: residues 8-28 and 41-61; these read AVFALIATSSILLISVPVVFA and FSGTSLWIGLVFLVAILNSLI.

The protein belongs to the PsbZ family. As to quaternary structure, PSII is composed of 1 copy each of membrane proteins PsbA, PsbB, PsbC, PsbD, PsbE, PsbF, PsbH, PsbI, PsbJ, PsbK, PsbL, PsbM, PsbT, PsbY, PsbZ, Psb30/Ycf12, at least 3 peripheral proteins of the oxygen-evolving complex and a large number of cofactors. It forms dimeric complexes.

The protein localises to the plastid. It is found in the chloroplast thylakoid membrane. May control the interaction of photosystem II (PSII) cores with the light-harvesting antenna, regulates electron flow through the 2 photosystem reaction centers. PSII is a light-driven water plastoquinone oxidoreductase, using light energy to abstract electrons from H(2)O, generating a proton gradient subsequently used for ATP formation. In Calycanthus floridus var. glaucus (Eastern sweetshrub), this protein is Photosystem II reaction center protein Z.